The following is a 204-amino-acid chain: Large ribosomal subunit protein bL25 (204 aa).

Residues methionine 1–leucine 23 are disordered.

This sequence belongs to the bacterial ribosomal protein bL25 family. CTC subfamily. Part of the 50S ribosomal subunit; part of the 5S rRNA/L5/L18/L25 subcomplex. Contacts the 5S rRNA. Binds to the 5S rRNA independently of L5 and L18.

In terms of biological role, this is one of the proteins that binds to the 5S RNA in the ribosome where it forms part of the central protuberance. In Novosphingobium aromaticivorans (strain ATCC 700278 / DSM 12444 / CCUG 56034 / CIP 105152 / NBRC 16084 / F199), this protein is Large ribosomal subunit protein bL25.